We begin with the raw amino-acid sequence, 99 residues long: Large ribosomal subunit protein eL21 (99 aa).

This sequence belongs to the eukaryotic ribosomal protein eL21 family.

The chain is Large ribosomal subunit protein eL21 from Ignicoccus hospitalis (strain KIN4/I / DSM 18386 / JCM 14125).